The following is a 411-amino-acid chain: Dual-specificity RNA methyltransferase RlmN (411 aa).

E125 (proton acceptor) is an active-site residue. The Radical SAM core domain occupies 131 to 380 (EEGRGTLCIS…IRTPRGRDIL (250 aa)). C138 and C383 are oxidised to a cystine. Residues C145, C149, and C152 each coordinate [4Fe-4S] cluster. S-adenosyl-L-methionine contacts are provided by residues 209–210 (GE), S241, 263–265 (SLH), and N340. Catalysis depends on C383, which acts as the S-methylcysteine intermediate.

Belongs to the radical SAM superfamily. RlmN family. The cofactor is [4Fe-4S] cluster.

Its subcellular location is the cytoplasm. It catalyses the reaction adenosine(2503) in 23S rRNA + 2 reduced [2Fe-2S]-[ferredoxin] + 2 S-adenosyl-L-methionine = 2-methyladenosine(2503) in 23S rRNA + 5'-deoxyadenosine + L-methionine + 2 oxidized [2Fe-2S]-[ferredoxin] + S-adenosyl-L-homocysteine. It carries out the reaction adenosine(37) in tRNA + 2 reduced [2Fe-2S]-[ferredoxin] + 2 S-adenosyl-L-methionine = 2-methyladenosine(37) in tRNA + 5'-deoxyadenosine + L-methionine + 2 oxidized [2Fe-2S]-[ferredoxin] + S-adenosyl-L-homocysteine. In terms of biological role, specifically methylates position 2 of adenine 2503 in 23S rRNA and position 2 of adenine 37 in tRNAs. m2A2503 modification seems to play a crucial role in the proofreading step occurring at the peptidyl transferase center and thus would serve to optimize ribosomal fidelity. The chain is Dual-specificity RNA methyltransferase RlmN from Brucella melitensis biotype 2 (strain ATCC 23457).